The chain runs to 309 residues: MAATLRELRGRIRSAGSIKKITKAQELIATSRIAKAQARVEAARPYSAEITSMLTELASASALDHPLLVARENPRRAAVLVVSSDRGLCGAYNANVLRQAEELFSLLREEGKEPVLYTVGRKALGYFSFRQREVVESWAGFSERPTYENAREIADTLVTAFMSGADDEGDDAGADGILGVDELHIVFTEFKSMLSQSAAARRIAPMVVEYVGDEQPEEGPQTLFSFEPDPETLFDALLPRYVATRVYAALLEAAASESASRRRAMKSATDNADDLIKALTLAANRERQAQITQEISEIVGGANALADAK.

The protein belongs to the ATPase gamma chain family. In terms of assembly, F-type ATPases have 2 components, CF(1) - the catalytic core - and CF(0) - the membrane proton channel. CF(1) has five subunits: alpha(3), beta(3), gamma(1), delta(1), epsilon(1). CF(0) has three main subunits: a, b and c.

It localises to the cell membrane. Functionally, produces ATP from ADP in the presence of a proton gradient across the membrane. The gamma chain is believed to be important in regulating ATPase activity and the flow of protons through the CF(0) complex. This Mycolicibacterium vanbaalenii (strain DSM 7251 / JCM 13017 / BCRC 16820 / KCTC 9966 / NRRL B-24157 / PYR-1) (Mycobacterium vanbaalenii) protein is ATP synthase gamma chain.